The primary structure comprises 139 residues: uncharacterized protein (139 aa).

The region spanning 9 to 133 (QAAQIRIARP…DGWRIVFMNS (125 aa)) is the VOC domain.

This is an uncharacterized protein from Bacillus subtilis (strain 168).